A 135-amino-acid chain; its full sequence is ATP synthase epsilon chain (135 aa).

Belongs to the ATPase epsilon chain family. As to quaternary structure, F-type ATPases have 2 components, CF(1) - the catalytic core - and CF(0) - the membrane proton channel. CF(1) has five subunits: alpha(3), beta(3), gamma(1), delta(1), epsilon(1). CF(0) has three main subunits: a, b and c.

The protein localises to the cell inner membrane. In terms of biological role, produces ATP from ADP in the presence of a proton gradient across the membrane. The sequence is that of ATP synthase epsilon chain from Brucella anthropi (strain ATCC 49188 / DSM 6882 / CCUG 24695 / JCM 21032 / LMG 3331 / NBRC 15819 / NCTC 12168 / Alc 37) (Ochrobactrum anthropi).